The chain runs to 92 residues: uncharacterized protein (92 aa).

An HMA domain is found at 24-89 (KQIVLKVKEM…AIHKLKYTAE (66 aa)). A metal cation is bound by residues C35 and C38.

This is an uncharacterized protein from Haemophilus influenzae (strain ATCC 51907 / DSM 11121 / KW20 / Rd).